The following is a 394-amino-acid chain: Quinolinate synthase (394 aa).

Residues His67 and Ser84 each contribute to the iminosuccinate site. Cys131 is a binding site for [4Fe-4S] cluster. Iminosuccinate-binding positions include 163 to 165 and Ser184; that span reads YMN. Residue Cys254 coordinates [4Fe-4S] cluster. Iminosuccinate contacts are provided by residues 280-282 and Thr297; that span reads HPE. Cys346 provides a ligand contact to [4Fe-4S] cluster.

Belongs to the quinolinate synthase family. Type 3 subfamily. The cofactor is [4Fe-4S] cluster.

It localises to the cytoplasm. It catalyses the reaction iminosuccinate + dihydroxyacetone phosphate = quinolinate + phosphate + 2 H2O + H(+). Its pathway is cofactor biosynthesis; NAD(+) biosynthesis; quinolinate from iminoaspartate: step 1/1. Its function is as follows. Catalyzes the condensation of iminoaspartate with dihydroxyacetone phosphate to form quinolinate. This Streptomyces coelicolor (strain ATCC BAA-471 / A3(2) / M145) protein is Quinolinate synthase.